The following is a 484-amino-acid chain: tRNA sulfurtransferase (484 aa).

One can recognise a THUMP domain in the interval 62–166 (GPVIDELVRI…DDSYHIAHRR (105 aa)). Residues 184–185 (LI), Lys-266, Gly-288, and Gln-297 each bind ATP. A disulfide bridge links Cys-345 with Cys-456. Positions 404–482 (PSVDDVIIDV…GHGNIKVYAP (79 aa)) constitute a Rhodanese domain. Residue Cys-456 is the Cysteine persulfide intermediate of the active site.

It belongs to the ThiI family.

The protein localises to the cytoplasm. The enzyme catalyses [ThiI sulfur-carrier protein]-S-sulfanyl-L-cysteine + a uridine in tRNA + 2 reduced [2Fe-2S]-[ferredoxin] + ATP + H(+) = [ThiI sulfur-carrier protein]-L-cysteine + a 4-thiouridine in tRNA + 2 oxidized [2Fe-2S]-[ferredoxin] + AMP + diphosphate. It carries out the reaction [ThiS sulfur-carrier protein]-C-terminal Gly-Gly-AMP + S-sulfanyl-L-cysteinyl-[cysteine desulfurase] + AH2 = [ThiS sulfur-carrier protein]-C-terminal-Gly-aminoethanethioate + L-cysteinyl-[cysteine desulfurase] + A + AMP + 2 H(+). The protein operates within cofactor biosynthesis; thiamine diphosphate biosynthesis. Its function is as follows. Catalyzes the ATP-dependent transfer of a sulfur to tRNA to produce 4-thiouridine in position 8 of tRNAs, which functions as a near-UV photosensor. Also catalyzes the transfer of sulfur to the sulfur carrier protein ThiS, forming ThiS-thiocarboxylate. This is a step in the synthesis of thiazole, in the thiamine biosynthesis pathway. The sulfur is donated as persulfide by IscS. This chain is tRNA sulfurtransferase, found in Marinobacter nauticus (strain ATCC 700491 / DSM 11845 / VT8) (Marinobacter aquaeolei).